The primary structure comprises 253 residues: Porin thermoregulatory protein EnvY (253 aa).

In terms of domain architecture, HTH araC/xylS-type spans 149 to 246 (DSVCRIIQSD…GLTPLNYLAK (98 aa)). 2 consecutive DNA-binding regions (H-T-H motif) follow at residues 166–187 (RIVA…KNEN) and 213–236 (ITQV…KAFY).

Its function is as follows. Influences the temperature-dependent expression of several E.coli envelope proteins, most notably the porins OmpF and OmpC and the lambda receptor, LamB. In Escherichia coli (strain K12), this protein is Porin thermoregulatory protein EnvY (envY).